The sequence spans 342 residues: tRNA-specific 2-thiouridylase MnmA 2 (342 aa).

Cysteine 62 functions as the Nucleophile in the catalytic mechanism. A disulfide bridge links cysteine 62 with cysteine 160. ATP is bound at residue glycine 86. Positions lysine 110–glutamine 112 are interaction with tRNA. Cysteine 160 (cysteine persulfide intermediate) is an active-site residue. Positions arginine 268 to tyrosine 269 are interaction with tRNA.

The protein belongs to the MnmA/TRMU family.

It is found in the cytoplasm. The enzyme catalyses S-sulfanyl-L-cysteinyl-[protein] + uridine(34) in tRNA + AH2 + ATP = 2-thiouridine(34) in tRNA + L-cysteinyl-[protein] + A + AMP + diphosphate + H(+). Functionally, catalyzes the 2-thiolation of uridine at the wobble position (U34) of tRNA, leading to the formation of s(2)U34. The chain is tRNA-specific 2-thiouridylase MnmA 2 from Syntrophus aciditrophicus (strain SB).